Here is a 96-residue protein sequence, read N- to C-terminus: Protein RSI-1 (96 aa).

Positions 1–29 (MAKSGYNASFLLLISMFLILLTFSNVVEG) are cleaved as a signal peptide.

Belongs to the GASA family. Post-translationally, six disulfide bonds may be present. In terms of tissue distribution, expressed very early in lateral root development.

The protein resides in the secreted. In Solanum lycopersicum (Tomato), this protein is Protein RSI-1 (RSI-1).